The following is a 274-amino-acid chain: Protein YehF (274 aa).

Positions 2–78 (RHFIYQDEKS…KDNSLQPSQT (77 aa)) constitute a WGR domain.

In terms of biological role, has been implicated in selenate reduction; a mini-Tn10 insertion mutant in 'molR', (which was mapped to 47.3 centisomes i.e. this locus), is defective in the reduction of selenate. This chain is Protein YehF (yehF), found in Escherichia coli (strain K12).